The sequence spans 148 residues: UPF0756 membrane protein NMC1845 (148 aa).

Transmembrane regions (helical) follow at residues 13–35 (LILL…LLLM), 50–70 (HGLN…LVSG), 80–100 (FLNF…WLAG), and 121–141 (VIGV…AGIL).

It belongs to the UPF0756 family.

It is found in the cell membrane. In Neisseria meningitidis serogroup C / serotype 2a (strain ATCC 700532 / DSM 15464 / FAM18), this protein is UPF0756 membrane protein NMC1845.